Reading from the N-terminus, the 952-residue chain is Histone deacetylase 7 (952 aa).

2 transcription repression regions span residues 1 to 268 (MDLR…DSDR) and 218 to 546 (GPNP…EHAG). The interval 49-149 (SMDTPMPELQ…LPSDPPEHFP (101 aa)) is interaction with MEF2A. Phosphoserine is present on serine 109. Disordered stretches follow at residues 130–224 (LSSF…PILG) and 261–283 (PARA…ILGS). Serine 155 bears the Phosphoserine; by MARK2, MARK3 and PKD/PRKD1 mark. Basic and acidic residues predominate over residues 167 to 181 (KSLERRKNPLLRKES). At serine 181 the chain carries Phosphoserine; by PKD/PRKD2. Low complexity predominate over residues 197–212 (SSPSSSSTPASGCSSP). Serine 283 is modified (phosphoserine). Threonine 286 is subject to Phosphothreonine. Disordered stretches follow at residues 349 to 377 (LHWP…MQPR), 389 to 441 (KRSA…GPAP), and 460 to 510 (LPRG…SSSE). Serine 358 is subject to Phosphoserine; by PKD/PRKD1. Over residues 360-374 (PLPPSATAPPPPGPM) the composition is skewed to pro residues. Phosphoserine is present on residues serine 364, serine 405, serine 486, serine 487, and serine 507. A compositionally biased stretch (low complexity) spans 482–503 (SRAQSSPAAPASLSAPEPASQA). The interval 512-865 (PARTLPFTTG…VAALLGNRVD (354 aa)) is histone deacetylase. Zn(2+) is bound by residues cysteine 533, cysteine 535, and histidine 541. Serine 595 is subject to Phosphoserine. Cysteine 618 is a binding site for Zn(2+). Histidine 670 is a catalytic residue. The segment at 877 to 952 (NLNAIRSLEA…LVEEEEPMNL (76 aa)) is interaction with SIN3A. The Nuclear export signal signature appears at 917 to 952 (KEEVEAVTALASLSVGILAEDRPSEQLVEEEEPMNL).

This sequence belongs to the histone deacetylase family. HD type 2 subfamily. Interacts with HDAC1, HDAC2, HDAC3, HDAC4, HDAC5, NCOR1, NCOR2, SIN3A, SIN3B, RBBP4, RBBP7, MTA1L1, SAP30 and MBD3. Interacts with KAT5 and EDNRA. Interacts with the 14-3-3 protein YWHAE, MEF2A, MEF2B and MEF2C. Interacts with ZMYND15. Interacts with KDM5B. Interacts with PML. Interacts with FOXP3. Interacts with RARA. May be phosphorylated by CaMK1. Phosphorylated by the PKC kinases PKN1 and PKN2, impairing nuclear import. Phosphorylation at Ser-155 by MARK2, MARK3 and PRKD1 promotes interaction with 14-3-3 proteins and export from the nucleus. Phosphorylation at Ser-155 is a prerequisite for phosphorylation at Ser-181.

Its subcellular location is the nucleus. The protein resides in the cytoplasm. The catalysed reaction is N(6)-acetyl-L-lysyl-[histone] + H2O = L-lysyl-[histone] + acetate. It catalyses the reaction N(6)-acetyl-L-lysyl-[protein] + H2O = L-lysyl-[protein] + acetate. In terms of biological role, responsible for the deacetylation of lysine residues on the N-terminal part of the core histones (H2A, H2B, H3 and H4). Histone deacetylation gives a tag for epigenetic repression and plays an important role in transcriptional regulation, cell cycle progression and developmental events. Histone deacetylases act via the formation of large multiprotein complexes. Involved in muscle maturation by repressing transcription of myocyte enhancer factors such as MEF2A, MEF2B and MEF2C. During muscle differentiation, it shuttles into the cytoplasm, allowing the expression of myocyte enhancer factors. May be involved in Epstein-Barr virus (EBV) latency, possibly by repressing the viral BZLF1 gene. Positively regulates the transcriptional repressor activity of FOXP3. Serves as a corepressor of RARA, causing its deacetylation and inhibition of RARE DNA element binding. In association with RARA, plays a role in the repression of microRNA-10a and thereby in the inflammatory response. Also acetylates non-histone proteins, such as ALKBH5. This chain is Histone deacetylase 7 (HDAC7), found in Homo sapiens (Human).